The chain runs to 410 residues: E3 ubiquitin-protein ligase ICP0 (410 aa).

The segment at 46–85 adopts an RING-type zinc-finger fold; that stretch reads CPICLDVAATEAQTLPCMHKFCLDCIQRWTLTSTACPLCN. Residues 243 to 410 are disordered; sequence TSESEAHSDS…IFIDLTQDDD (168 aa). A compositionally biased stretch (basic residues) spans 287–315; the sequence is APRRSPRRARRAAVLRREQRRTRCLRRGR. Low complexity-rich tracts occupy residues 329 to 340 and 348 to 399; these read SSGEGSSAQHGA and GSAN…PRSA.

Auto-ubiquitinated.

It catalyses the reaction S-ubiquitinyl-[E2 ubiquitin-conjugating enzyme]-L-cysteine + [acceptor protein]-L-lysine = [E2 ubiquitin-conjugating enzyme]-L-cysteine + N(6)-ubiquitinyl-[acceptor protein]-L-lysine.. Its function is as follows. Evades nuclear antiviral defenses triggered by dsDNA viruses. Acts during the initial stages of lytic infection and the reactivation of latent viral genome. Prevents the antiviral effect of nuclear bodies by degrading host PML and SP100. This is E3 ubiquitin-protein ligase ICP0 (EP0) from Sus scrofa (Pig).